A 241-amino-acid polypeptide reads, in one-letter code: Proteasome subunit beta type-6 (241 aa).

Positions 1–19 are excised as a propeptide; that stretch reads MATIASEYSSEASNTPIEH.

The protein belongs to the peptidase T1B family. The 26S proteasome consists of a 20S proteasome core and two 19S regulatory subunits. The 20S proteasome core is composed of 28 subunits that are arranged in four stacked rings, resulting in a barrel-shaped structure. The two end rings are each formed by seven alpha subunits, and the two central rings are each formed by seven beta subunits. The catalytic chamber with the active sites is on the inside of the barrel.

The protein resides in the cytoplasm. It is found in the nucleus. In terms of biological role, non-catalytic component of the proteasome which degrades poly-ubiquitinated proteins in the cytoplasm and in the nucleus. It is essential for the regulated turnover of proteins and for the removal of misfolded proteins. The proteasome is a multicatalytic proteinase complex that is characterized by its ability to cleave peptides with Arg, Phe, Tyr, Leu, and Glu adjacent to the leaving group at neutral or slightly basic pH. It has an ATP-dependent proteolytic activity. The protein is Proteasome subunit beta type-6 (PRE7) of Saccharomyces cerevisiae (strain ATCC 204508 / S288c) (Baker's yeast).